A 413-amino-acid chain; its full sequence is uncharacterized protein (413 aa).

Residues 1–20 form the signal peptide; sequence MRVIIVIMMVVFVVVGTSSG.

This is an uncharacterized protein from Archaeoglobus fulgidus (strain ATCC 49558 / DSM 4304 / JCM 9628 / NBRC 100126 / VC-16).